A 152-amino-acid polypeptide reads, in one-letter code: Urease accessory protein UreE (152 aa).

Belongs to the UreE family.

The protein resides in the cytoplasm. Involved in urease metallocenter assembly. Binds nickel. Probably functions as a nickel donor during metallocenter assembly. The sequence is that of Urease accessory protein UreE from Citrobacter koseri (strain ATCC BAA-895 / CDC 4225-83 / SGSC4696).